Reading from the N-terminus, the 456-residue chain is Argininosuccinate lyase (456 aa).

This sequence belongs to the lyase 1 family. Argininosuccinate lyase subfamily.

Its subcellular location is the cytoplasm. It catalyses the reaction 2-(N(omega)-L-arginino)succinate = fumarate + L-arginine. Its pathway is amino-acid biosynthesis; L-arginine biosynthesis; L-arginine from L-ornithine and carbamoyl phosphate: step 3/3. The chain is Argininosuccinate lyase from Listeria innocua serovar 6a (strain ATCC BAA-680 / CLIP 11262).